The following is a 147-amino-acid chain: Ubiquitin-conjugating enzyme E2 5A (147 aa).

The segment covering 1–15 (MASKRIQKELKDLQK) has biased composition (basic and acidic residues). Residues 1–24 (MASKRIQKELKDLQKDPPTSCSAG) form a disordered region. Positions 1–147 (MASKRIQKEL…ARTWTQRYAM (147 aa)) constitute a UBC core domain. The Glycyl thioester intermediate role is filled by Cys-85.

The protein belongs to the ubiquitin-conjugating enzyme family.

It carries out the reaction S-ubiquitinyl-[E1 ubiquitin-activating enzyme]-L-cysteine + [E2 ubiquitin-conjugating enzyme]-L-cysteine = [E1 ubiquitin-activating enzyme]-L-cysteine + S-ubiquitinyl-[E2 ubiquitin-conjugating enzyme]-L-cysteine.. Its pathway is protein modification; protein ubiquitination. Its function is as follows. E2 conjugating enzyme that associates with the E3 ubiquitin-protein ligase EL5 to mediate ubiquitination of target proteins. The polypeptide is Ubiquitin-conjugating enzyme E2 5A (UBC5A) (Oryza sativa subsp. japonica (Rice)).